The chain runs to 107 residues: Urease subunit beta (107 aa).

It belongs to the urease beta subunit family. In terms of assembly, heterotrimer of UreA (gamma), UreB (beta) and UreC (alpha) subunits. Three heterotrimers associate to form the active enzyme.

It is found in the cytoplasm. It catalyses the reaction urea + 2 H2O + H(+) = hydrogencarbonate + 2 NH4(+). Its pathway is nitrogen metabolism; urea degradation; CO(2) and NH(3) from urea (urease route): step 1/1. The protein is Urease subunit beta of Bacillus sp. (strain TB-90).